Here is a 341-residue protein sequence, read N- to C-terminus: Small ribosomal subunit biogenesis GTPase RsgA (341 aa).

A CP-type G domain is found at 112-268 (RQQLIAANLD…LIDTPGMREL (157 aa)). GTP contacts are provided by residues 157–160 (TKVD) and 210–218 (GSSGAGKST). Zn(2+) is bound by residues Cys290, Cys295, His297, and Cys303.

Belongs to the TRAFAC class YlqF/YawG GTPase family. RsgA subfamily. As to quaternary structure, monomer. Associates with 30S ribosomal subunit, binds 16S rRNA. It depends on Zn(2+) as a cofactor.

It localises to the cytoplasm. One of several proteins that assist in the late maturation steps of the functional core of the 30S ribosomal subunit. Helps release RbfA from mature subunits. May play a role in the assembly of ribosomal proteins into the subunit. Circularly permuted GTPase that catalyzes slow GTP hydrolysis, GTPase activity is stimulated by the 30S ribosomal subunit. The protein is Small ribosomal subunit biogenesis GTPase RsgA of Xylella fastidiosa (strain 9a5c).